The sequence spans 507 residues: Histidine ammonia-lyase (507 aa).

Residues Ala-141–Gly-143 constitute a cross-link (5-imidazolinone (Ala-Gly)). The residue at position 142 (Ser-142) is a 2,3-didehydroalanine (Ser).

It belongs to the PAL/histidase family. Post-translationally, contains an active site 4-methylidene-imidazol-5-one (MIO), which is formed autocatalytically by cyclization and dehydration of residues Ala-Ser-Gly.

The protein resides in the cytoplasm. The enzyme catalyses L-histidine = trans-urocanate + NH4(+). It participates in amino-acid degradation; L-histidine degradation into L-glutamate; N-formimidoyl-L-glutamate from L-histidine: step 1/3. The polypeptide is Histidine ammonia-lyase (Burkholderia cenocepacia (strain ATCC BAA-245 / DSM 16553 / LMG 16656 / NCTC 13227 / J2315 / CF5610) (Burkholderia cepacia (strain J2315))).